Reading from the N-terminus, the 570-residue chain is Formate--tetrahydrofolate ligase (570 aa).

65 to 72 (TPFGEGKT) is an ATP binding site.

It belongs to the formate--tetrahydrofolate ligase family.

The enzyme catalyses (6S)-5,6,7,8-tetrahydrofolate + formate + ATP = (6R)-10-formyltetrahydrofolate + ADP + phosphate. It functions in the pathway one-carbon metabolism; tetrahydrofolate interconversion. This chain is Formate--tetrahydrofolate ligase, found in Shewanella woodyi (strain ATCC 51908 / MS32).